The following is a 252-amino-acid chain: Triosephosphate isomerase (252 aa).

A substrate-binding site is contributed by 10-12 (NWK). His-96 serves as the catalytic Electrophile. The Proton acceptor role is filled by Glu-168. Residues Gly-174, Ser-214, and 235–236 (GG) contribute to the substrate site.

It belongs to the triosephosphate isomerase family. As to quaternary structure, homodimer.

It is found in the cytoplasm. The enzyme catalyses D-glyceraldehyde 3-phosphate = dihydroxyacetone phosphate. It participates in carbohydrate biosynthesis; gluconeogenesis. The protein operates within carbohydrate degradation; glycolysis; D-glyceraldehyde 3-phosphate from glycerone phosphate: step 1/1. Involved in the gluconeogenesis. Catalyzes stereospecifically the conversion of dihydroxyacetone phosphate (DHAP) to D-glyceraldehyde-3-phosphate (G3P). In Lactococcus lactis subsp. cremoris (strain MG1363), this protein is Triosephosphate isomerase.